Reading from the N-terminus, the 906-residue chain is Formin-like protein 18 (906 aa).

Residues 1 to 25 (MSKLRWLIMAFLVCLLLLTPKDLEG) form the signal peptide. Residues 120-140 (MVVVGLSAACVALVTLVGICF) traverse the membrane as a helical segment. 2 disordered regions span residues 267–416 (AGGG…QADP) and 854–906 (NAKA…DSDD). The segment covering 274-292 (AAPPPPAGPPPPAPPPLPP) has biased composition (pro residues). Over residues 293 to 303 (SHHHHHGHHPP) the composition is skewed to basic residues. Pro residues-rich tracts occupy residues 320 to 339 (APPP…PAPS), 348 to 375 (GPPP…PPPG), and 383 to 402 (GPPP…PPFK). Composition is skewed to low complexity over residues 403 to 416 (KSPG…QADP) and 854 to 877 (NAKA…QSSF). The FH2 domain maps to 411 to 866 (AAQADPNKAK…AKKQQQPTPA (456 aa)). The span at 878-889 (RDPRQQIQDRRA) shows a compositional bias: basic and acidic residues. Residues 897–906 (SSSSSSDSDD) show a composition bias toward low complexity.

It belongs to the formin-like family. Class-I subfamily.

It is found in the membrane. The sequence is that of Formin-like protein 18 (FH18) from Oryza sativa subsp. japonica (Rice).